The sequence spans 152 residues: SsrA-binding protein (152 aa).

The protein belongs to the SmpB family.

It is found in the cytoplasm. Required for rescue of stalled ribosomes mediated by trans-translation. Binds to transfer-messenger RNA (tmRNA), required for stable association of tmRNA with ribosomes. tmRNA and SmpB together mimic tRNA shape, replacing the anticodon stem-loop with SmpB. tmRNA is encoded by the ssrA gene; the 2 termini fold to resemble tRNA(Ala) and it encodes a 'tag peptide', a short internal open reading frame. During trans-translation Ala-aminoacylated tmRNA acts like a tRNA, entering the A-site of stalled ribosomes, displacing the stalled mRNA. The ribosome then switches to translate the ORF on the tmRNA; the nascent peptide is terminated with the 'tag peptide' encoded by the tmRNA and targeted for degradation. The ribosome is freed to recommence translation, which seems to be the essential function of trans-translation. This is SsrA-binding protein from Rickettsia typhi (strain ATCC VR-144 / Wilmington).